Here is a 243-residue protein sequence, read N- to C-terminus: High affinity immunoglobulin epsilon receptor subunit beta (243 aa).

The tract at residues 1 to 48 (MDTENKSRADLALPNPQESPSAPDIELLEASPPAKALPEKPASPPPQQ) is disordered. Residues 1–59 (MDTENKSRADLALPNPQESPSAPDIELLEASPPAKALPEKPASPPPQQTWQSFLKKELE) are Cytoplasmic-facing. A helical membrane pass occupies residues 60–79 (FLGVTQVLVGLICLCFGTVV). At 80–97 (CSTLQTSDFDDEVLLLYR) the chain is on the extracellular side. The chain crosses the membrane as a helical span at residues 98–117 (AGYPFWGAVLFVLSGFLSIM). Residues 118–130 (SERKNTLYLVRGS) lie on the Cytoplasmic side of the membrane. Residues 131-150 (LGANIVSSIAAGLGIAILIL) form a helical membrane-spanning segment. Residues 151-179 (NLSNNSAYMNYCKDITEDDGCFVTSFITE) lie on the Extracellular side of the membrane. Residues 180 to 199 (LVLMLLFLTILAFCSAVLLI) form a helical membrane-spanning segment. Topologically, residues 200–243 (IYRIGQEFERSKVPDDRLYEELHVYSPIYSALEDTREASAPVVS) are cytoplasmic. Tyr218 and Tyr224 each carry phosphotyrosine. Ser225 bears the Phosphoserine mark. A Phosphotyrosine modification is found at Tyr228.

The protein belongs to the MS4A family. Tetramer of an alpha chain, a beta chain, and two disulfide linked gamma chains. Binds LILRB1. Interacts with FES/FPS and LYN. Interacts with FGR. Phosphorylated on tyrosine residues by LYN.

The protein localises to the membrane. In terms of biological role, high affinity receptor that binds to the Fc region of immunoglobulins epsilon. Aggregation of FCER1 by multivalent antigens is required for the full mast cell response, including the release of preformed mediators (such as histamine) by degranulation and de novo production of lipid mediators and cytokines. Also mediates the secretion of important lymphokines. Binding of allergen to receptor-bound IgE leads to cell activation and the release of mediators responsible for the manifestations of allergy. The chain is High affinity immunoglobulin epsilon receptor subunit beta (Ms4a2) from Rattus norvegicus (Rat).